The chain runs to 257 residues: UPF0246 protein RHOS4_29700 (257 aa).

Belongs to the UPF0246 family.

This Cereibacter sphaeroides (strain ATCC 17023 / DSM 158 / JCM 6121 / CCUG 31486 / LMG 2827 / NBRC 12203 / NCIMB 8253 / ATH 2.4.1.) (Rhodobacter sphaeroides) protein is UPF0246 protein RHOS4_29700.